The chain runs to 184 residues: Large ribosomal subunit protein eL13 (184 aa).

The tract at residues 28–53 (PARKERRRQARKAKAQRIAPRPASGP) is disordered. Residues 31–42 (KERRRQARKAKA) show a composition bias toward basic residues.

Belongs to the eukaryotic ribosomal protein eL13 family.

This Schistosoma mansoni (Blood fluke) protein is Large ribosomal subunit protein eL13 (RPL13).